The chain runs to 474 residues: Bifunctional protein HldE (474 aa).

A ribokinase region spans residues 1-318 (MKLSMPRFDQ…RAVQREQGSE (318 aa)). 194-197 (NLSE) is a binding site for ATP. Asp-263 is an active-site residue. The interval 343–474 (FTNGCFDILH…AIVEKIRQKG (132 aa)) is cytidylyltransferase.

It in the N-terminal section; belongs to the carbohydrate kinase PfkB family. The protein in the C-terminal section; belongs to the cytidylyltransferase family. Homodimer.

It catalyses the reaction D-glycero-beta-D-manno-heptose 7-phosphate + ATP = D-glycero-beta-D-manno-heptose 1,7-bisphosphate + ADP + H(+). The catalysed reaction is D-glycero-beta-D-manno-heptose 1-phosphate + ATP + H(+) = ADP-D-glycero-beta-D-manno-heptose + diphosphate. It participates in nucleotide-sugar biosynthesis; ADP-L-glycero-beta-D-manno-heptose biosynthesis; ADP-L-glycero-beta-D-manno-heptose from D-glycero-beta-D-manno-heptose 7-phosphate: step 1/4. It functions in the pathway nucleotide-sugar biosynthesis; ADP-L-glycero-beta-D-manno-heptose biosynthesis; ADP-L-glycero-beta-D-manno-heptose from D-glycero-beta-D-manno-heptose 7-phosphate: step 3/4. In terms of biological role, catalyzes the phosphorylation of D-glycero-D-manno-heptose 7-phosphate at the C-1 position to selectively form D-glycero-beta-D-manno-heptose-1,7-bisphosphate. Functionally, catalyzes the ADP transfer from ATP to D-glycero-beta-D-manno-heptose 1-phosphate, yielding ADP-D-glycero-beta-D-manno-heptose. In Pseudomonas aeruginosa (strain UCBPP-PA14), this protein is Bifunctional protein HldE.